The sequence spans 100 residues: Mitochondrial import inner membrane translocase subunit Tim10 B (100 aa).

Residues 25–49 carry the Twin CX3C motif motif; sequence CFQRCVPSLHHRALDAEEEACLHSC. 2 disulfide bridges follow: Cys-25-Cys-49 and Cys-29-Cys-45.

It belongs to the small Tim family. Component of the TIM22 complex, which core is composed of TIMM22, associated with TIMM10 (TIMM10A and/or TIMM10B), TIMM9, AGK and TIMM29.

It is found in the mitochondrion inner membrane. In terms of biological role, component of the TIM22 complex, a complex that mediates the import and insertion of multi-pass transmembrane proteins into the mitochondrial inner membrane. The TIM22 complex forms a twin-pore translocase that uses the membrane potential as the external driving force. In the TIM22 complex, it may act as a docking point for the soluble 70 kDa complex that guides the target proteins in transit through the aqueous mitochondrial intermembrane space. This Rattus norvegicus (Rat) protein is Mitochondrial import inner membrane translocase subunit Tim10 B (Timm10b).